The chain runs to 490 residues: Aspartyl/glutamyl-tRNA(Asn/Gln) amidotransferase subunit B (490 aa).

The protein belongs to the GatB/GatE family. GatB subfamily. As to quaternary structure, heterotrimer of A, B and C subunits.

It catalyses the reaction L-glutamyl-tRNA(Gln) + L-glutamine + ATP + H2O = L-glutaminyl-tRNA(Gln) + L-glutamate + ADP + phosphate + H(+). It carries out the reaction L-aspartyl-tRNA(Asn) + L-glutamine + ATP + H2O = L-asparaginyl-tRNA(Asn) + L-glutamate + ADP + phosphate + 2 H(+). In terms of biological role, allows the formation of correctly charged Asn-tRNA(Asn) or Gln-tRNA(Gln) through the transamidation of misacylated Asp-tRNA(Asn) or Glu-tRNA(Gln) in organisms which lack either or both of asparaginyl-tRNA or glutaminyl-tRNA synthetases. The reaction takes place in the presence of glutamine and ATP through an activated phospho-Asp-tRNA(Asn) or phospho-Glu-tRNA(Gln). The protein is Aspartyl/glutamyl-tRNA(Asn/Gln) amidotransferase subunit B of Methylorubrum extorquens (strain PA1) (Methylobacterium extorquens).